The primary structure comprises 70 residues: Uteroglobin (70 aa).

This sequence belongs to the secretoglobin family. Antiparallel homodimer; disulfide-linked. Interaction with LMBR1L is controversial. Club cells (nonciliated cells of the surface epithelium of the pulmonary airways).

The protein localises to the secreted. Its function is as follows. Binds phosphatidylcholine, phosphatidylinositol, polychlorinated biphenyls (PCB) and weakly progesterone, potent inhibitor of phospholipase A2. In Macaca fuscata fuscata (Japanese macaque), this protein is Uteroglobin (SCGB1A1).